A 451-amino-acid polypeptide reads, in one-letter code: Cindoxin reductase (451 aa).

FAD contacts are provided by Ala-24, Glu-45, Leu-53, and Val-89. NADP(+) is bound by residues 157–160 (NGNV) and 197–198 (RS). FAD is bound by residues Trp-338 and 345–347 (GGI). Gly-345 lines the NADP(+) pocket.

This sequence belongs to the ferredoxin--NADP reductase type 1 family. Requires FAD as cofactor.

Involved in the degradation of cineol (eucalyptol). Catalyzes the reduction of cindoxin (CinC). This Citrobacter braakii protein is Cindoxin reductase (cinB).